We begin with the raw amino-acid sequence, 180 residues long: Adenine phosphoribosyltransferase (180 aa).

This sequence belongs to the purine/pyrimidine phosphoribosyltransferase family. Homodimer.

It localises to the cytoplasm. The catalysed reaction is AMP + diphosphate = 5-phospho-alpha-D-ribose 1-diphosphate + adenine. The protein operates within purine metabolism; AMP biosynthesis via salvage pathway; AMP from adenine: step 1/1. Functionally, catalyzes a salvage reaction resulting in the formation of AMP, that is energically less costly than de novo synthesis. This chain is Adenine phosphoribosyltransferase, found in Marinomonas sp. (strain MWYL1).